A 284-amino-acid polypeptide reads, in one-letter code: uncharacterized protein (284 aa).

The AB hydrolase-1 domain occupies 25–123 (PILVMHGGHS…NTLTLQSAVT (99 aa)). The active site involves Ser96.

It belongs to the AB hydrolase superfamily.

This is an uncharacterized protein from Bacillus subtilis (strain 168).